The primary structure comprises 252 residues: Small ribosomal subunit protein uS3 (252 aa).

Positions 39 to 110 (IRKALMKELK…EVKINVVEIK (72 aa)) constitute a KH type-2 domain. The disordered stretch occupies residues 218-252 (TSDEKPKFEKRDFNRSNNNRRDQAPKSHPVAKEAK). The span at 219–252 (SDEKPKFEKRDFNRSNNNRRDQAPKSHPVAKEAK) shows a compositional bias: basic and acidic residues.

It belongs to the universal ribosomal protein uS3 family. In terms of assembly, part of the 30S ribosomal subunit. Forms a tight complex with proteins S10 and S14.

Functionally, binds the lower part of the 30S subunit head. Binds mRNA in the 70S ribosome, positioning it for translation. This chain is Small ribosomal subunit protein uS3, found in Spiroplasma citri.